Reading from the N-terminus, the 398-residue chain is Diaminopropionate ammonia-lyase (398 aa).

The residue at position 77 (lysine 77) is an N6-(pyridoxal phosphate)lysine.

It belongs to the diaminopropionate ammonia-lyase family. Homodimer. Pyridoxal 5'-phosphate is required as a cofactor.

The catalysed reaction is (S)-2,3-diaminopropanoate + H2O + H(+) = pyruvate + 2 NH4(+). It carries out the reaction (R)-2,3-diaminopropanoate + H2O + H(+) = pyruvate + 2 NH4(+). Functionally, catalyzes the alpha,beta-elimination reaction of both L- and D-alpha,beta-diaminopropionate (DAP) to form pyruvate and ammonia. The D-isomer of serine is degraded to pyruvate, though very poorly; other amino acids (L-serine, D- and L-threonine, D- and L-beta-Cl-alanine) are not substrates. The chain is Diaminopropionate ammonia-lyase (ygeX) from Escherichia coli O157:H7.